A 771-amino-acid chain; its full sequence is Tetratricopeptide repeat-containing protein trd-1 (771 aa).

TPR repeat units follow at residues 389–415 (LEMW…IRRL), 416–449 (IEQK…SDDR), 451–484 (ARAH…QPIQ), 485–518 (LGTW…QPDH), 520–552 (EAWN…NYEH), and 553–586 (PNVW…NKRG).

Belongs to the TTC27 family. In terms of tissue distribution, expressed in the spermatheca.

The protein localises to the cytoplasm. Functionally, developmental protein required for cell fate determination in both the germline and seam cells of the developing epidermis. Specifically, involved in sex determination and may function in parallel or downstream of other sex determination factors, including tra-2 and fem-3, to promote oogenesis in its role in the regulation of the switch from spermatogenesis to oogenesis in the gonads. Also implicated in the mitosis to meiosis switch in distal tip cells. In Caenorhabditis elegans, this protein is Tetratricopeptide repeat-containing protein trd-1.